A 575-amino-acid chain; its full sequence is MRPWTGSWRWIMLILFAWGTLLFYIGGHLVRDNDHPDHSSRELSKILAKLERLKQQNEDLRRMAESLRIPEGPIDQGPASGRIRALEEQLVKAKEQIENYKKQTRNGLGKDHEILRRRIENGAKELWFFLQSELKKLKNLEGNELQRHADEFLSDLGHHERSIMTDLYYLSQTDGAGDWREKEAKDLTELVQRRITYLQNPKDCSKAKKLVCNINKGCGYGCQLHHVVYCFMIAYGTQRTLILESHNWRYATGGWETVFRPVSETCTDRSGVYTGHWSGEIKDKNVQVVELPIVDSLHPRPPYLPLAVPEDLADRLVRVHGDPAVWWVSQFVKYLIRPQPWLEKEIEEATKKLGFKHPVIGVHVRRTDKVGTEAAFHPIEEYMVHVEEHFQLLARRMQVDKKRVYLATDDPSLLKEAKTKYPHYEFISDNSISWSAGLHNRYTENSLRGVILDIHFLSQADFLVCTFSSQVCRVAYEIMQTLHPDASANFHSLDDIYYFGGQNAHNQIAIYPHEPRTADEIPMEPGDIIGVAGNHWDGYSKGVNRKLGRTGLYPSYKVREKIETVKVPHVPEAEK.

Residues 1–9 (MRPWTGSWR) lie on the Cytoplasmic side of the membrane. The helical; Signal-anchor for type II membrane protein transmembrane segment at 10 to 30 (WIMLILFAWGTLLFYIGGHLV) threads the bilayer. Topologically, residues 31–575 (RDNDHPDHSS…KVPHVPEAEK (545 aa)) are lumenal. 3 disulfide bridges follow: Cys204–Cys266, Cys212–Cys230, and Cys218–Cys222. A GT23 domain is found at 206 to 493 (KAKKLVCNIN…PDASANFHSL (288 aa)). Ser278 is modified (phosphoserine). Residues 299–305 (PRPPYLP) carry the SH3-binding motif. The tract at residues 365–366 (RR) is important for donor substrate binding. A disulfide bridge connects residues Cys465 and Cys472. The SH3 domain maps to 502–563 (QNAHNQIAIY…PSYKVREKIE (62 aa)).

This sequence belongs to the glycosyltransferase 23 family. In terms of processing, tyrosine phosphorylated by PKDCC/VLK. Highest expression found in brain. Also found in heart, lung, spleen and kidney.

The protein localises to the golgi apparatus. It localises to the golgi stack membrane. It catalyses the reaction N(4)-{beta-D-GlcNAc-(1-&gt;2)-alpha-D-Man-(1-&gt;3)-[beta-D-GlcNAc-(1-&gt;2)-alpha-D-Man-(1-&gt;6)]-beta-D-Man-(1-&gt;4)-beta-D-GlcNAc-(1-&gt;4)-beta-D-GlcNAc}-L-asparaginyl-[protein] + GDP-beta-L-fucose = an N(4)-{beta-D-GlcNAc-(1-&gt;2)-alpha-D-Man-(1-&gt;3)-[beta-D-GlcNAc-(1-&gt;2)-alpha-D-Man-(1-&gt;6)]-beta-D-Man-(1-&gt;4)-beta-D-GlcNAc-(1-&gt;4)-[alpha-L-Fuc-(1-&gt;6)]-beta-D-GlcNAc}-L-asparaginyl-[protein] + GDP + H(+). It participates in protein modification; protein glycosylation. Catalyzes the addition of fucose in alpha 1-6 linkage to the first GlcNAc residue, next to the peptide chains in N-glycans. This Bos taurus (Bovine) protein is Alpha-(1,6)-fucosyltransferase (FUT8).